The chain runs to 493 residues: MECQRCPASARNPATVESRKEKFCDECFIKFVSTKQRKQMMKDEYFRNLFKVIYPFEKEGSVSKILLPLSHSDSGSLVMLDIVHDLLLEQTKQHNNRTGFTVDVLTVFTEENVSVIKERMESLINEKMSQLNKISNIFNVHFIDVNEFFNNASEVSTFIIDNENFEIFSKSKSVDDSNILTLKEILGKYCLNNSSRSDLISIIKTQLIKHFAYENGYNAIMWGHSMTKLSEVIISLVVKGKGSQIATFLDSESFDTLNNKPCKYKNLYPMKDLLSVEIESFLQIRNLAQFLINVEETNVKPNCLIARKSLPSLGQQKLVKNMTINEITNKYFQDIQNDYSNIISTVLRTADKLTQPKSSMAKPSQCQICQSKIYTNPSNWLNRITVTSPYPVETTEEKYLFKQWQDSKLGQSHTHYVELLNEIKQGASNSLDVEDGDVKLCYGCLILLNTSIKDKNLVWPKVDTMDITANATNKNKELSQILDQFEINSDGEE.

S489 carries the phosphoserine modification.

Belongs to the CTU2/NCS2 family. Interacts with NCS6 and URM1. May act by forming a heterodimer with NCS6.

The protein localises to the cytoplasm. It functions in the pathway tRNA modification; 5-methoxycarbonylmethyl-2-thiouridine-tRNA biosynthesis. Functionally, plays a central role in 2-thiolation of mcm(5)S(2)U at tRNA wobble positions of tRNA(Lys), tRNA(Glu) and tRNA(Gln). May act by forming a heterodimer with NCS6 that ligates sulfur from thiocarboxylated URM1 onto the uridine of tRNAs at wobble position. Prior mcm(5) tRNA modification by the elongator complex is required for 2-thiolation. May also be involved in protein urmylation and in invasive and pseudohyphal growth. Inhibits replication of Brome mosaic virus. The chain is Cytoplasmic tRNA 2-thiolation protein 2 from Saccharomyces cerevisiae (strain ATCC 204508 / S288c) (Baker's yeast).